We begin with the raw amino-acid sequence, 674 residues long: Probable copper-transporting P-type ATPase B (674 aa).

The segment at 1-22 (MNHSNQMHHDNHESHNHHSGHA) is disordered. The span at 7 to 16 (MHHDNHESHN) shows a compositional bias: basic and acidic residues. Transmembrane regions (helical) follow at residues 32–52 (FFVS…MGIN), 57–77 (FTFP…FFYG), 95–115 (GMMT…LYAF), 127–147 (TMDF…GHWI), 284–304 (GYLF…WMLI), and 315–335 (LVTV…PLVT). Catalysis depends on aspartate 367, which acts as the 4-aspartylphosphate intermediate. Mg(2+) is bound by residues aspartate 565 and aspartate 569. Helical transmembrane passes span 623 to 645 (LWWG…AFVG) and 649 to 671 (SPAV…AFTL).

The protein belongs to the cation transport ATPase (P-type) (TC 3.A.3) family. Type IB subfamily.

The protein resides in the cell membrane. It carries out the reaction Cu(+)(in) + ATP + H2O = Cu(+)(out) + ADP + phosphate + H(+). Functionally, involved in copper transport. The polypeptide is Probable copper-transporting P-type ATPase B (copB) (Staphylococcus epidermidis (strain ATCC 12228 / FDA PCI 1200)).